Consider the following 466-residue polypeptide: MVFLSGNASDSSNCTHPPPPVNISKAILLGVILGGLILFGVLGNILVILSVACHRHLHSVTHYYIVNLAVADLLLTSTVLPFSAIFEILGYWAFGRVFCNVWAAVDVLCCTASIMGLCIISIDRYIGVSYPLRYPTIVTQKRGLMALLCVWALSLVISIGPLFGWRQPAPEDETICQINEEPGYVLFSALGSFYVPLTIILVMYCRVYVVAKRESRGLKSGLKTDKSDSEQVTLRIHRKNAQVGGSGVTSAKNKTHFSVRLLKFSREKKAAKTLGIVVGCFVLCWLPFFLVMPIGSFFPDFRPSETVFKIAFWLGYLNSCINPIIYPCSSQEFKKAFQNVLRIQCLRRKQSSKHTLGYTLHAPSHVLEGQHKDLVRIPVGSAETFYKISKTDGVCEWKIFSSLPRGSARMAVARDPSACTTARVRSKSFLQVCCCLGPSTPSHGENHQIPTIKIHTISLSENGEEV.

Over 1–27 (MVFLSGNASDSSNCTHPPPPVNISKAI) the chain is Extracellular. 3 N-linked (GlcNAc...) asparagine glycosylation sites follow: N7, N13, and N22. Residues 28 to 51 (LLGVILGGLILFGVLGNILVILSV) form a helical membrane-spanning segment. Residues 52 to 64 (ACHRHLHSVTHYY) are Cytoplasmic-facing. A helical membrane pass occupies residues 65–88 (IVNLAVADLLLTSTVLPFSAIFEI). Residues 89–99 (LGYWAFGRVFC) are Extracellular-facing. C99 and C176 are joined by a disulfide. Residues 100–122 (NVWAAVDVLCCTASIMGLCIISI) form a helical membrane-spanning segment. Residues 123–143 (DRYIGVSYPLRYPTIVTQKRG) lie on the Cytoplasmic side of the membrane. Residues 144–167 (LMALLCVWALSLVISIGPLFGWRQ) traverse the membrane as a helical segment. The Extracellular segment spans residues 168 to 181 (PAPEDETICQINEE). A helical membrane pass occupies residues 182 to 205 (PGYVLFSALGSFYVPLTIILVMYC). Residues 206 to 273 (RVYVVAKRES…FSREKKAAKT (68 aa)) are Cytoplasmic-facing. S215 bears the Phosphoserine; by PKA mark. The chain crosses the membrane as a helical span at residues 274–297 (LGIVVGCFVLCWLPFFLVMPIGSF). The Extracellular segment spans residues 298–305 (FPDFRPSE). The chain crosses the membrane as a helical span at residues 306 to 329 (TVFKIAFWLGYLNSCINPIIYPCS). At 330-466 (SQEFKKAFQN…ISLSENGEEV (137 aa)) the chain is on the cytoplasmic side. The Nuclear localization signal motif lies at 334-349 (KKAFQNVLRIQCLRRK). C345 carries the S-palmitoyl cysteine lipid modification.

Belongs to the G-protein coupled receptor 1 family. Adrenergic receptor subfamily. ADRA1A sub-subfamily. Homo- and heterooligomer. Heterooligomerizes with ADRA1B homooligomers in cardiac myocytes. Interacts with CAVIN4.

Its subcellular location is the nucleus membrane. It localises to the cell membrane. The protein resides in the cytoplasm. The protein localises to the membrane. It is found in the caveola. This alpha-adrenergic receptor mediates its action by association with G proteins that activate a phosphatidylinositol-calcium second messenger system. Its effect is mediated by G(q) and G(11) proteins. Nuclear ADRA1A-ADRA1B heterooligomers regulate phenylephrine (PE)-stimulated ERK signaling in cardiac myocytes. The protein is Alpha-1A adrenergic receptor (ADRA1A) of Bos taurus (Bovine).